A 102-amino-acid polypeptide reads, in one-letter code: uncharacterized protein (102 aa).

The disordered stretch occupies residues 77–102 (RKDGDEKSKPNSKDYASRPIRDHSKI).

This is an uncharacterized protein from Microplitis demolitor (Parasitoid wasp).